A 98-amino-acid polypeptide reads, in one-letter code: Lipolysis-activating peptide 1-alpha chain (98 aa).

The N-terminal stretch at 1-22 (MMKLVLFGIIVILFSMIGSIHG) is a signal peptide. The LCN-type CS-alpha/beta domain occupies 26 to 89 (PGNYPLNTYG…IWDAVKRHCK (64 aa)). Cystine bridges form between Cys40/Cys63, Cys49/Cys68, and Cys53/Cys70. Lys96 is modified (lysine amide).

This sequence belongs to the long (3 C-C) scorpion toxin superfamily. In terms of assembly, monomer (edited version) and heterodimer (non-edited version) of this alpha chain and a beta chain (AC B8XGZ8). Expressed by the venom gland.

The protein localises to the secreted. In terms of biological role, the heterodimer non-edited LVP1 induces lipolysis in rat adipocytes. Induction of lipolysis by LVP1 appears to be mediated through the beta-2 adrenergic receptor pathway (ADRB2). The edited BmKBTx-like, similar to beta-toxins, may modulate voltage-gated sodium channels (Nav) and may block voltage-gated potassium channels (Kv). This Buthus israelis (Israeli scorpion) protein is Lipolysis-activating peptide 1-alpha chain.